The sequence spans 463 residues: Cysteine--tRNA ligase (463 aa).

Cysteine 33 lines the Zn(2+) pocket. Positions 35 to 45 (PTVYDFAHIGN) match the 'HIGH' region motif. Zn(2+) contacts are provided by cysteine 221, histidine 246, and glutamate 250. Positions 279–283 (KMSKS) match the 'KMSKS' region motif. Residue lysine 282 coordinates ATP.

Belongs to the class-I aminoacyl-tRNA synthetase family. Monomer. Zn(2+) is required as a cofactor.

Its subcellular location is the cytoplasm. It carries out the reaction tRNA(Cys) + L-cysteine + ATP = L-cysteinyl-tRNA(Cys) + AMP + diphosphate. The sequence is that of Cysteine--tRNA ligase from Rhizobium leguminosarum bv. trifolii (strain WSM2304).